The sequence spans 98 residues: NADH-ubiquinone oxidoreductase chain 4L (98 aa).

A run of 3 helical transmembrane segments spans residues 1 to 21, 29 to 49, and 61 to 81; these read MSMVYANIFLAFIMSLMGLLM, SLLCLEGMMLSLFVMMTATIL, and IILLVFAACEAALGLSLLVTV.

This sequence belongs to the complex I subunit 4L family. In terms of assembly, core subunit of respiratory chain NADH dehydrogenase (Complex I) which is composed of 45 different subunits.

It is found in the mitochondrion inner membrane. The enzyme catalyses a ubiquinone + NADH + 5 H(+)(in) = a ubiquinol + NAD(+) + 4 H(+)(out). Functionally, core subunit of the mitochondrial membrane respiratory chain NADH dehydrogenase (Complex I) which catalyzes electron transfer from NADH through the respiratory chain, using ubiquinone as an electron acceptor. Part of the enzyme membrane arm which is embedded in the lipid bilayer and involved in proton translocation. This Pusa caspica (Caspian seal) protein is NADH-ubiquinone oxidoreductase chain 4L (MT-ND4L).